The sequence spans 505 residues: ATP synthase subunit alpha (505 aa).

Gly-170–Thr-177 contacts ATP.

This sequence belongs to the ATPase alpha/beta chains family. As to quaternary structure, F-type ATPases have 2 components, CF(1) - the catalytic core - and CF(0) - the membrane proton channel. CF(1) has five subunits: alpha(3), beta(3), gamma(1), delta(1), epsilon(1). CF(0) has four main subunits: a(1), b(1), b'(1) and c(9-12).

The protein localises to the cellular thylakoid membrane. It catalyses the reaction ATP + H2O + 4 H(+)(in) = ADP + phosphate + 5 H(+)(out). Produces ATP from ADP in the presence of a proton gradient across the membrane. The alpha chain is a regulatory subunit. This chain is ATP synthase subunit alpha, found in Prochlorococcus marinus (strain MIT 9303).